The primary structure comprises 443 residues: Deoxyguanosinetriphosphate triphosphohydrolase-like protein (443 aa).

The region spanning Arg-61 to Gly-246 is the HD domain.

It belongs to the dGTPase family. Type 3 subfamily.

The protein is Deoxyguanosinetriphosphate triphosphohydrolase-like protein of Pseudomonas aeruginosa (strain LESB58).